A 227-amino-acid chain; its full sequence is Fibrillarin-like rRNA/tRNA 2'-O-methyltransferase (227 aa).

Residues 82–83, 100–101, 125–126, and 145–148 contribute to the S-adenosyl-L-methionine site; these read TT, EF, DA, and DVAQ.

The protein belongs to the methyltransferase superfamily. Fibrillarin family. In terms of assembly, interacts with nop5. Component of box C/D small ribonucleoprotein (sRNP) particles that contain rpl7ae, FlpA and nop5, plus a guide RNA.

In terms of biological role, involved in pre-rRNA and tRNA processing. Utilizes the methyl donor S-adenosyl-L-methionine to catalyze the site-specific 2'-hydroxyl methylation of ribose moieties in rRNA and tRNA. Site specificity is provided by a guide RNA that base pairs with the substrate. Methylation occurs at a characteristic distance from the sequence involved in base pairing with the guide RNA. In Methanosarcina acetivorans (strain ATCC 35395 / DSM 2834 / JCM 12185 / C2A), this protein is Fibrillarin-like rRNA/tRNA 2'-O-methyltransferase.